Reading from the N-terminus, the 360-residue chain is DNA replication and repair protein RecF (360 aa).

30–37 contacts ATP; sequence GQNGSGKT.

Belongs to the RecF family.

It localises to the cytoplasm. Its function is as follows. The RecF protein is involved in DNA metabolism; it is required for DNA replication and normal SOS inducibility. RecF binds preferentially to single-stranded, linear DNA. It also seems to bind ATP. This Shewanella putrefaciens (strain CN-32 / ATCC BAA-453) protein is DNA replication and repair protein RecF.